Here is a 237-residue protein sequence, read N- to C-terminus: Ras-related protein Rab-33A (237 aa).

GTP contacts are provided by Asn46, Val47, Gly48, Lys49, Thr50, Cys51, Thr65, and Thr68. Thr50 provides a ligand contact to Mg(2+). The short motif at 59–71 (GTFPDKTEATIGV) is the Switch 1 element. Mg(2+) is bound by residues Thr68 and Asp91. A Switch 2 motif is present at residues 92 to 111 (TAGQERFRKSMVEHYYRNVH). 6 residues coordinate GTP: Gly94, Asn151, Lys152, Asp154, Ala182, and Lys183. Residues Cys235 and Cys237 are each lipidated (S-geranylgeranyl cysteine). At Cys237 the chain carries Cysteine methyl ester.

It belongs to the small GTPase superfamily. Rab family. In terms of assembly, interacts with ATG16L1; the interaction is important for autophagosome formation. Mg(2+) serves as cofactor. Expressed predominantly in brain. Weak expression in ovary.

The protein localises to the cell membrane. It carries out the reaction GTP + H2O = GDP + phosphate + H(+). Regulated by guanine nucleotide exchange factors (GEFs) which promote the exchange of bound GDP for free GTP. Regulated by GTPase activating proteins (GAPs) which increase the GTP hydrolysis activity. Inhibited by GDP dissociation inhibitors (GDIs). Its function is as follows. The small GTPases Rab are key regulators of intracellular membrane trafficking, from the formation of transport vesicles to their fusion with membranes. Rabs cycle between an inactive GDP-bound form and an active GTP-bound form that is able to recruit to membranes different sets of downstream effectors directly responsible for vesicle formation, movement, tethering and fusion. Modulates autophagosome formation through interaction with ATG16L1. This is Ras-related protein Rab-33A from Mus musculus (Mouse).